The chain runs to 196 residues: DnaA initiator-associating protein DiaA (196 aa).

An SIS domain is found at 34 to 196; that stretch reads LVQSLLNGNK…DNTLFPHQDV (163 aa).

This sequence belongs to the SIS family. DiaA subfamily. As to quaternary structure, homotetramer; dimer of dimers.

Required for the timely initiation of chromosomal replication via direct interactions with the DnaA initiator protein. The sequence is that of DnaA initiator-associating protein DiaA from Escherichia coli O6:K15:H31 (strain 536 / UPEC).